The chain runs to 297 residues: HTH-type transcriptional regulator ArgP (297 aa).

The HTH lysR-type domain maps to 4 to 60; the sequence is PDYRTLQALDAVIRERGFERAAQKLCITQSAVSQRIKQLENMFGQPLLVRTVPPRPT. Positions 21–40 form a DNA-binding region, H-T-H motif; the sequence is FERAAQKLCITQSAVSQRIK.

Belongs to the LysR transcriptional regulatory family. Homodimer.

Controls the transcription of genes involved in arginine and lysine metabolism. This is HTH-type transcriptional regulator ArgP from Citrobacter koseri (strain ATCC BAA-895 / CDC 4225-83 / SGSC4696).